Here is a 484-residue protein sequence, read N- to C-terminus: MLRISIDSIKQFGSFVPGYNNTSYHAAGRAIRTSSLYSTMISANPRRCLHSSKLLNKEGQEEGYNEQLISKMSSQNGSNSRQNESEGKKEGKASSVKSLLQHTHSHSHTHMHDNPLLSLNVQQIKKNPGVRITWIGLASNVGMAVGKFVGGITFHSQALLADSVHALSDLVSDFLTLFSVQYASRKPTSEYPYGYGKVETVGSLAVSTILAMAGISIGWSSLCAIVGPVIPHAILESMAGLIGETHSHSQSLTQQATNVNAVWIAAGSILVKEWVFQATKKVAIQTNSNVLMANAWHHRVDSLTSLVALVAITSSYFFNIQSLDNLGGLVVSGLIIKTGGQGILSSLKELVDQSIPPTDPRYLEIESVIKDSIGSLKTDLDLKQSLHVRDLTILASGPNLRATTTLEVPVLHSGQEVGIRFLENAISTIREDLRMKVPNVGKVDVEFVDVTSDSKGDLEHSHDTKSTNHTHTHSDSADTHTHKH.

The N-terminal 56 residues, Met-1–Asn-56, are a transit peptide targeting the mitochondrion. Residues Ser-73–Gln-82 are compositionally biased toward polar residues. A disordered region spans residues Ser-73–Asn-114. Residues Asn-83–Lys-92 show a composition bias toward basic and acidic residues. Transmembrane regions (helical) follow at residues Ile-132 to Ile-152, Ala-158 to Phe-178, Ile-209 to Val-229, Ala-256 to Phe-276, and Tyr-316 to Ile-336. A disordered region spans residues Asp-453–His-484.

It belongs to the cation diffusion facilitator (CDF) transporter (TC 2.A.4) family. SLC30A subfamily.

The protein resides in the mitochondrion membrane. In terms of biological role, mitochondrial metal transporter involved in mitochondrial iron accumulation. This chain is Mitochondrial metal transporter 2 (MMT2), found in Saccharomyces cerevisiae (strain ATCC 204508 / S288c) (Baker's yeast).